The chain runs to 281 residues: Pantothenate synthetase (281 aa).

30-37 (MGYYHAGH) is an ATP binding site. The active-site Proton donor is the His37. Gln61 is a (R)-pantoate binding site. Gln61 contributes to the beta-alanine binding site. 147–150 (GEKD) provides a ligand contact to ATP. (R)-pantoate is bound at residue Gln153. ATP is bound by residues Val176 and 184-187 (MSSR).

This sequence belongs to the pantothenate synthetase family. In terms of assembly, homodimer.

The protein resides in the cytoplasm. It catalyses the reaction (R)-pantoate + beta-alanine + ATP = (R)-pantothenate + AMP + diphosphate + H(+). The protein operates within cofactor biosynthesis; (R)-pantothenate biosynthesis; (R)-pantothenate from (R)-pantoate and beta-alanine: step 1/1. In terms of biological role, catalyzes the condensation of pantoate with beta-alanine in an ATP-dependent reaction via a pantoyl-adenylate intermediate. The chain is Pantothenate synthetase from Oleidesulfovibrio alaskensis (strain ATCC BAA-1058 / DSM 17464 / G20) (Desulfovibrio alaskensis).